Here is a 150-residue protein sequence, read N- to C-terminus: Ribonuclease H (150 aa).

The RNase H type-1 domain maps to 1–141; that stretch reads MRPVIIHTDG…ADQLARDGLT (141 aa). 4 residues coordinate Mg(2+): Asp-9, Glu-47, Asp-69, and Asp-133.

The protein belongs to the RNase H family. In terms of assembly, monomer. The cofactor is Mg(2+).

The protein localises to the cytoplasm. It catalyses the reaction Endonucleolytic cleavage to 5'-phosphomonoester.. In terms of biological role, endonuclease that specifically degrades the RNA of RNA-DNA hybrids. The polypeptide is Ribonuclease H (Rhodopseudomonas palustris (strain BisB5)).